Consider the following 88-residue polypeptide: UPF0250 protein SO_1163 (88 aa).

It belongs to the UPF0250 family.

This chain is UPF0250 protein SO_1163, found in Shewanella oneidensis (strain ATCC 700550 / JCM 31522 / CIP 106686 / LMG 19005 / NCIMB 14063 / MR-1).